A 388-amino-acid chain; its full sequence is MKHLHRFFSSDASGGIILIIAAILAMIMANSGATSGWYHDFLETPVQLRVGSLEINKNMLLWINDALMAVFFLLVGLEVKRELMQGSLASLRQAAFPVIAAIGGMIVPALLYLAFNYADPITREGWAIPAATDIAFALGVLALLGSRVPLALKIFLMALAIIDDLGAIIIIALFYTNDLSMASLGVAAVAIAVLAVLNLCGARRTGVYILVGVVLWTAVLKSGVHATLAGVIVGFFIPLKEKHGRSPAKRLEHVLHPWVAYLILPLFAFANAGVSLQGVTLDGLTSILPLGIIAGLLIGKPLGISLFCWLALRLKLAHLPEGTTYQQIMVVGILCGIGFTMSIFIASLAFGSVDPELINWAKLGILVGSISSAVIGYSWLRVRLRPSV.

The Cytoplasmic portion of the chain corresponds to 1-11 (MKHLHRFFSSD). A helical membrane pass occupies residues 12–31 (ASGGIILIIAAILAMIMANS). The Periplasmic portion of the chain corresponds to 32–58 (GATSGWYHDFLETPVQLRVGSLEINKN). Positions 45-58 (PVQLRVGSLEINKN) are important for dimerization. Residues 59-80 (MLLWINDALMAVFFLLVGLEVK) traverse the membrane as a helical segment. At 81–96 (RELMQGSLASLRQAAF) the chain is on the cytoplasmic side. Residues 97 to 116 (PVIAAIGGMIVPALLYLAFN) traverse the membrane as a helical segment. The Periplasmic segment spans residues 117 to 122 (YADPIT). The helical transmembrane segment at 123–130 (REGWAIPA) threads the bilayer. Residues 131–154 (ATDIAFALGVLALLGSRVPLALKI) lie on the Cytoplasmic side of the membrane. The helical transmembrane segment at 155 to 176 (FLMALAIIDDLGAIIIIALFYT) threads the bilayer. At 177 to 180 (NDLS) the chain is on the periplasmic side. A helical membrane pass occupies residues 181–200 (MASLGVAAVAIAVLAVLNLC). The Cytoplasmic portion of the chain corresponds to 201-204 (GARR). A helical membrane pass occupies residues 205-222 (TGVYILVGVVLWTAVLKS). A topological domain (periplasmic) is located at residue Gly223. The chain crosses the membrane as a helical span at residues 224–236 (VHATLAGVIVGFF). Residues 237 to 253 (IPLKEKHGRSPAKRLEH) are Cytoplasmic-facing. A helical membrane pass occupies residues 254–272 (VLHPWVAYLILPLFAFANA). The Periplasmic segment spans residues 273-286 (GVSLQGVTLDGLTS). Residues 287–310 (ILPLGIIAGLLIGKPLGISLFCWL) form a helical membrane-spanning segment. The Cytoplasmic portion of the chain corresponds to 311–339 (ALRLKLAHLPEGTTYQQIMVVGILCGIGF). The chain crosses the membrane as a helical span at residues 340 to 350 (TMSIFIASLAF). Over 351–357 (GSVDPEL) the chain is Periplasmic. A helical membrane pass occupies residues 358 to 380 (INWAKLGILVGSISSAVIGYSWL). Topologically, residues 381–388 (RVRLRPSV) are cytoplasmic.

This sequence belongs to the NhaA Na(+)/H(+) (TC 2.A.33) antiporter family. Monomer. Homodimer. Under routine stress conditions, the monomeric form is fully functional. However, the dimeric form is much more efficient in conferring growth resistance under extreme stress conditions.

It localises to the cell inner membrane. The catalysed reaction is Na(+)(in) + 2 H(+)(out) = Na(+)(out) + 2 H(+)(in). It carries out the reaction Li(+)(in) + 2 H(+)(out) = Li(+)(out) + 2 H(+)(in). Activity is regulated by pH. Active at alkaline pH. Activity is strongly down-regulated below pH 6.5 and a dramatic increase in activity is observed upon increase of the pH from 6.5 to 8.5. Functionally, na(+)/H(+) antiporter that extrudes sodium in exchange for external protons. Plays an important role in the regulation of intracellular pH, cellular Na(+) content and cell volume. Catalyzes the exchange of 2 H(+) per Na(+). This stoichiometry applies at both neutral and alkaline pH values. In addition, can also transport lithium and is involved in lithium detoxification. Binding of the Li(+) and H(+) ligands to NhaA is coupled and antagonistic. In Escherichia coli (strain K12), this protein is Na(+)/H(+) antiporter NhaA.